A 487-amino-acid polypeptide reads, in one-letter code: MTTATAEAQASTAQPAGVGRIARVTGPVVDIEFPHDSIPGIYNALKTTITIGDRSTEITLEVAQHLGDDLVRAISLKPTDGLVRGGEVRDTGSLITVPVGDVTKGKVFDVTGEILNAEPGEKIEIAERWPIHRQPPSFDHLESKTQLFETGIKVIDLLTPYVQGGKIGLFGGAGVGKTVLIQEMVQRVAQDHGGVSVFAGVGERTREGNDLIHEMEEAGVFDKTALVFGQMDEPPGTRLRVALSALTMAEYFRDVQKQDVLLFIDNIFRFTQAGSEVSTLLGRMPSAVGYQPNLADEMGLLQERITSTRGHSITSLQAIYVPADDYTDPAPATTFAHLDATTELSREIASKGLYPAVDPLTSTSRILDPRYLGADHYRVATTVKQILQKNKELQEIIAILGVDELSEEDKITVSRARRIQQFLSQNTYMAKKFTGVEGSTVPLKETIESFDAIAKGEFDHVAEQAFFNVGALSDVEEKWAQIQKENG.

171–178 (GGAGVGKT) is a binding site for ATP.

It belongs to the ATPase alpha/beta chains family. F-type ATPases have 2 components, CF(1) - the catalytic core - and CF(0) - the membrane proton channel. CF(1) has five subunits: alpha(3), beta(3), gamma(1), delta(1), epsilon(1). CF(0) has three main subunits: a(1), b(2) and c(9-12). The alpha and beta chains form an alternating ring which encloses part of the gamma chain. CF(1) is attached to CF(0) by a central stalk formed by the gamma and epsilon chains, while a peripheral stalk is formed by the delta and b chains.

The protein resides in the cell membrane. The catalysed reaction is ATP + H2O + 4 H(+)(in) = ADP + phosphate + 5 H(+)(out). In terms of biological role, produces ATP from ADP in the presence of a proton gradient across the membrane. The catalytic sites are hosted primarily by the beta subunits. This Leifsonia xyli subsp. xyli (strain CTCB07) protein is ATP synthase subunit beta.